The primary structure comprises 290 residues: Sodium/potassium-transporting ATPase subunit beta-2 (290 aa).

Over 1-39 (MVIQKEKKSCGQVVEEWKEFVWNPRTHQFMGRTGTSWAF) the chain is Cytoplasmic. A helical; Signal-anchor for type II membrane protein membrane pass occupies residues 40–67 (ILLFYLVFYGFLTAMFSLTMWVMLQTVS). The Extracellular segment spans residues 68–290 (DHTPKYQDRL…VAFKLRINKT (223 aa)). N-linked (GlcNAc...) asparagine glycans are attached at residues asparagine 96 and asparagine 118. Cysteine 129 and cysteine 150 form a disulfide bridge. Asparagine 153 carries an N-linked (GlcNAc...) asparagine glycan. A disulfide bridge connects residues cysteine 160 and cysteine 177. N-linked (GlcNAc...) asparagine glycosylation is found at asparagine 193, asparagine 197, asparagine 220, and asparagine 238. The tract at residues 193–290 (NQSMNVTCVG…VAFKLRINKT (98 aa)) is immunoglobulin-like. Cysteines 200 and 261 form a disulfide.

This sequence belongs to the X(+)/potassium ATPases subunit beta family. In terms of assembly, the sodium/potassium-transporting ATPase is composed of a catalytic alpha subunit, an auxiliary non-catalytic beta subunit and an additional regulatory subunit. Interacts with isoform 2 of BSG.

It localises to the cell membrane. This is the non-catalytic component of the active enzyme, which catalyzes the hydrolysis of ATP coupled with the exchange of Na(+) and K(+) ions across the plasma membrane. The exact function of the beta-2 subunit is not known. In terms of biological role, mediates cell adhesion of neurons and astrocytes, and promotes neurite outgrowth. The chain is Sodium/potassium-transporting ATPase subunit beta-2 (Atp1b2) from Mus musculus (Mouse).